Consider the following 626-residue polypeptide: Glyco-Gag protein (626 aa).

Topologically, residues 1–66 (LGDVPGTSGA…SVWNRSRAAR (66 aa)) are cytoplasmic. A helical transmembrane segment spans residues 67–86 (LVCCSIVLCCLCLTVFLYLS). Residues 87–626 (ENMGQAVTTP…PQASLLTLDD (540 aa)) are Extracellular-facing. An N-linked (GlcNAc...) asparagine; by host glycan is attached at Asn-113. Pro residues-rich tracts occupy residues 198–212 (PPSA…PLST) and 249–261 (DPPP…PPSP). Disordered regions lie at residues 198–306 (PPSA…FPLR) and 522–626 (RETP…TLDD). 2 stretches are compositionally biased toward basic and acidic residues: residues 522–554 (RETP…EKER) and 574–607 (RQDR…DCPK). Residues 526–566 (EEREERIRRETEEKEERRRAEDVQREKERDRRRHREMSKLL) are a coiled coil. The CCHC-type zinc-finger motif lies at 590–607 (DQCAYCKEKGHWARDCPK).

Glycosylated by host. In terms of processing, cleaved by host near the middle of the molecule, releasing the c-terminal half containing capsid and nucleoprotein domains op GAG.

It localises to the host cell membrane. Plays a role in viral particle release. Presumably acts by facilitating the fission of the virion bud at the cell surface. May prevent the antiviral activity of murine APOBEC3. The protein is Glyco-Gag protein of Mus musculus (Mouse).